The following is a 149-amino-acid chain: Major outer capsid protein (149 aa).

Homotrimer.

It is found in the virion. In terms of biological role, assembles to form an icosahedral capsid with a T=13 symmetry. Drives the penetration of the inner capsid (core) into the cytoplasm. The protein is Major outer capsid protein (P8) of Pseudomonas phage phi6 (Bacteriophage phi-6).